We begin with the raw amino-acid sequence, 388 residues long: 3-amino-5-hydroxybenzoate synthase (388 aa).

K188 is modified (N6-(pyridoxal phosphate)lysine).

Belongs to the degT/dnrJ/eryC1 family. Homodimer. Can interact with RifL. It depends on pyridoxal 5'-phosphate as a cofactor.

The enzyme catalyses 5-deoxy-5-amino-3-dehydroshikimate = 3-amino-5-hydroxybenzoate + H2O + H(+). The catalysed reaction is UDP-3-oxo-alpha-D-glucose + L-glutamine = UDP-alpha-D-kanosamine + 2-oxoglutaramate. It functions in the pathway antibiotic biosynthesis; rifamycin B biosynthesis. With respect to regulation, AHBA synthase activity is activated by 3-deoxy-D-arabinoheptulosonic acid 7-phosphate (DAHP), an intermediate in the shikimate pathway, and is irreversibly inhibited by gabaculine (5-amino-1,3-cyclohexadiene-1-carboxylate). Its function is as follows. Catalyzes the dehydration and aromatization of 5-amino-5-deoxy-3-dehydroshikimate (aminoDHS) to 3-amino-5-hydroxybenzoate (AHBA), a compound that then serves as the starter unit for the assembly of a polyketide during the biosynthesis of rifamycin B and other ansamycin antibiotics. Cannot utilize 5-deoxy-5-amino-3-dehydroquinate (aminoDHQ), 5-deoxy-5-aminoshikimate (aminoSA), quinate, 3-dehydroquinate, or 3-dehydroshikimate (DHS) as substrate. In a complex with RifL, RifK may have a second function in the AHBA pathway, acting as a transaminase introducing the nitrogen into the first pathway intermediate, UDP-3-keto-D-glucose, to give UDP-kanosamine. Appears to use glutamine as the nitrogen donor; NH(4)(+) or asparagine are 30% less effective as nitrogen donors and neither glutamate nor aspartate show activity. The protein is 3-amino-5-hydroxybenzoate synthase (rifK) of Amycolatopsis mediterranei (strain S699) (Nocardia mediterranei).